The primary structure comprises 358 residues: DNA polymerase IV (358 aa).

The 182-residue stretch at 4-185 (IIHIDMDCYF…LSLRKIPGVG (182 aa)) folds into the UmuC domain. Residues Asp-8 and Asp-103 each coordinate Mg(2+). Residue Glu-104 is part of the active site.

This sequence belongs to the DNA polymerase type-Y family. In terms of assembly, monomer. The cofactor is Mg(2+).

The protein localises to the cytoplasm. The catalysed reaction is DNA(n) + a 2'-deoxyribonucleoside 5'-triphosphate = DNA(n+1) + diphosphate. Poorly processive, error-prone DNA polymerase involved in untargeted mutagenesis. Copies undamaged DNA at stalled replication forks, which arise in vivo from mismatched or misaligned primer ends. These misaligned primers can be extended by PolIV. Exhibits no 3'-5' exonuclease (proofreading) activity. May be involved in translesional synthesis, in conjunction with the beta clamp from PolIII. The chain is DNA polymerase IV from Shewanella baltica (strain OS155 / ATCC BAA-1091).